Consider the following 792-residue polypeptide: Serine/threonine-protein kinase Nek4 (792 aa).

Residues 6–261 (YCYMRVVGRG…VRSILRQPYI (256 aa)) enclose the Protein kinase domain. Residues 12–20 (VGRGSYGEV) and lysine 35 each bind ATP. Catalysis depends on aspartate 131, which acts as the Proton acceptor. A Phosphothreonine; by autocatalysis modification is found at threonine 165. Disordered stretches follow at residues 329–358 (QEKPVDIGPLRSPASLEGHTGKQDMNNTGE), 379–515 (ANAG…LPSY), 527–611 (QQND…SITQ), and 628–657 (LSEDELSSSTSSTDKSDGDSREGKSHTNEM). Phosphoserine occurs at positions 340 and 343. Polar residues-rich tracts occupy residues 412 to 421 (QGNTKSSDQP), 456 to 467 (DQVTGIIENQDS), 473 to 484 (QPHSSMSEPSLS), 496 to 505 (AHSGTKSQFQ), and 541 to 551 (VNSSRTSSTAS). N6-methyllysine is present on lysine 566. Residues 602–611 (RFSSDCSITQ) are compositionally biased toward polar residues. Basic and acidic residues predominate over residues 641–657 (DKSDGDSREGKSHTNEM). The residue at position 675 (serine 675) is a Phosphoserine.

This sequence belongs to the protein kinase superfamily. NEK Ser/Thr protein kinase family. NIMA subfamily. Requires Mn(2+) as cofactor. As to expression, expressed ubiquitously among various organs and is up-regulated in the testis.

It localises to the cytoplasm. Its subcellular location is the cell projection. It is found in the cilium. The enzyme catalyses L-seryl-[protein] + ATP = O-phospho-L-seryl-[protein] + ADP + H(+). The catalysed reaction is L-threonyl-[protein] + ATP = O-phospho-L-threonyl-[protein] + ADP + H(+). In terms of biological role, required for normal entry into proliferative arrest after a limited number of cell divisions, also called replicative senescence. Required for normal cell cycle arrest in response to double-stranded DNA damage. Protein kinase that seems to act exclusively upon threonine residues. This is Serine/threonine-protein kinase Nek4 (Nek4) from Mus musculus (Mouse).